We begin with the raw amino-acid sequence, 477 residues long: Probable glycine dehydrogenase (decarboxylating) subunit 2 (477 aa).

Lys-264 bears the N6-(pyridoxal phosphate)lysine mark.

The protein belongs to the GcvP family. C-terminal subunit subfamily. In terms of assembly, the glycine cleavage system is composed of four proteins: P, T, L and H. In this organism, the P 'protein' is a heterodimer of two subunits. Requires pyridoxal 5'-phosphate as cofactor.

It carries out the reaction N(6)-[(R)-lipoyl]-L-lysyl-[glycine-cleavage complex H protein] + glycine + H(+) = N(6)-[(R)-S(8)-aminomethyldihydrolipoyl]-L-lysyl-[glycine-cleavage complex H protein] + CO2. In terms of biological role, the glycine cleavage system catalyzes the degradation of glycine. The P protein binds the alpha-amino group of glycine through its pyridoxal phosphate cofactor; CO(2) is released and the remaining methylamine moiety is then transferred to the lipoamide cofactor of the H protein. This chain is Probable glycine dehydrogenase (decarboxylating) subunit 2, found in Fervidobacterium nodosum (strain ATCC 35602 / DSM 5306 / Rt17-B1).